Reading from the N-terminus, the 440-residue chain is Endoplasmic reticulum junction formation protein lunapark (440 aa).

The Cytoplasmic segment spans residues 1–45 (MGALLAKWRAKPSTVEVLEKMEKDIQSLEEFRDKNQKLRKIWVAR). The stretch at 16 to 40 (EVLEKMEKDIQSLEEFRDKNQKLRK) forms a coiled coil. A helical membrane pass occupies residues 46-66 (LFFYSTILYILTSLTVYLWYL). Residues 67–77 (PGGMTARLLTT) lie on the Lumenal side of the membrane. Residues 78–98 (LLFLLFPVLIWFVRTLLILWF) traverse the membrane as a helical segment. The Cytoplasmic segment spans residues 99–440 (SRRTERNNDA…ESEESFMETE (342 aa)). A coiled-coil region spans residues 100–128 (RRTERNNDALELLKAEKKKILEEVMEKET). Residues 149–169 (LELPVPGPPITPRPGQDLRQR) form a disordered region. Phosphothreonine is present on Thr159. Residues Ser177, Ser179, Ser188, and Ser192 each carry the phosphoserine modification. At Thr198 the chain carries Phosphothreonine. The segment at 202–247 (QRDTSAPGGPPERSVQPTPQSNILQRRPGSPATAVSGMALHPPGPP) is disordered. Phosphoserine is present on residues Ser206 and Ser215. Polar residues predominate over residues 216-225 (VQPTPQSNIL). Thr219 is modified (phosphothreonine). Phosphoserine is present on residues Ser222 and Ser231. A C4-type; plays a role in ER morphology zinc finger spans residues 280–305 (CQQCFSHNGMALKEEFEYVAFRCAYC). The disordered stretch occupies residues 316-440 (PQAPRLQEIS…ESEESFMETE (125 aa)). Ser325 carries the post-translational modification Phosphoserine. Residues 334-343 (DSQGSVNTLQ) show a composition bias toward polar residues. Acidic residues-rich tracts occupy residues 370–411 (QAIE…DDTE) and 431–440 (ESEESFMETE).

Belongs to the lunapark family. Homodimer; homodimerization requires the C4-type zinc finger motif and decreases during mitosis in a phosphorylation-dependent manner. Phosphorylated. Phosphorylation at Thr-159 and Ser-325 occurs during interphase. Phosphorylation at Ser-177, Ser-179, Ser-188, Ser-192, Thr-198, Ser-206, Ser-215, Thr-219, Ser-222 and Ser-231 occurs during mitosis; these phosphorylations reduce both its homodimerization and the ER three-way tubular junction formation.

Its subcellular location is the endoplasmic reticulum membrane. Functionally, endoplasmic reticulum (ER)-shaping membrane protein that plays a role in determining ER morphology. Involved in the stabilization of nascent three-way ER tubular junctions within the ER network. May also play a role as a curvature-stabilizing protein within three-way ER tubular junction network. The polypeptide is Endoplasmic reticulum junction formation protein lunapark (lnpk) (Xenopus laevis (African clawed frog)).